A 339-amino-acid chain; its full sequence is Deoxyhypusine hydroxylase (339 aa).

2 HEAT-like PBS-type repeats span residues 71–97 and 104–130; these read LKHE…VVKN and CRHE…LRDD. Fe cation-binding residues include His73, Glu74, His106, and Glu107. Positions 159–183 are disordered; sequence EKLKPSDFTSIDPAPPLPMASSQPS. 3 HEAT-like PBS-type repeats span residues 200 to 233, 238 to 264, and 271 to 298; these read QRYR…GLKD, FRHE…TLSD, and VRHE…FLND. 4 residues coordinate Fe cation: His240, Glu241, His273, and Glu274.

It belongs to the deoxyhypusine hydroxylase family. Requires Fe(2+) as cofactor.

It is found in the cytoplasm. The protein localises to the nucleus. The catalysed reaction is [eIF5A protein]-deoxyhypusine + AH2 + O2 = [eIF5A protein]-hypusine + A + H2O. The protein operates within protein modification; eIF5A hypusination. Catalyzes the hydroxylation of the N(6)-(4-aminobutyl)-L-lysine intermediate to form hypusine, an essential post-translational modification only found in mature eIF-5A factor. The polypeptide is Deoxyhypusine hydroxylase (lia1) (Aspergillus oryzae (strain ATCC 42149 / RIB 40) (Yellow koji mold)).